A 351-amino-acid polypeptide reads, in one-letter code: Histidine protein kinase SaeS (351 aa).

The next 2 membrane-spanning stretches (helical) occupy residues 9–29 (IIIG…IAYI) and 40–60 (TLTL…SIFI). Residues 61 to 114 (NPLIQKIKQFNIKTKQFANGNYASNDKTFNSPKEIYELNQSFNKMASEITQQMN) enclose the HAMP domain. The 220-residue stretch at 129–348 (NLAHDLKTPL…TMTVTLHKLD (220 aa)) folds into the Histidine kinase domain. Histidine 132 is modified (phosphohistidine; by autocatalysis).

Post-translationally, autophosphorylated.

It is found in the cell membrane. It catalyses the reaction ATP + protein L-histidine = ADP + protein N-phospho-L-histidine.. Its function is as follows. Member of the two-component regulatory system SaeR/SaeS involved in the regulation of staphylococcal virulence factors in a strain-dependent fashion. Probably functions as a membrane-associated protein kinase that upon sensing the appropriate signal, autophosphorylates and in turn activates the cytosolic response regulator SaeR. This is Histidine protein kinase SaeS (saeS) from Staphylococcus aureus (strain USA300).